The following is a 350-amino-acid chain: Glycolate oxidase subunit GlcE (350 aa).

The 173-residue stretch at 1–173 (MLRECDYSQA…TEISMKVLPR (173 aa)) folds into the FAD-binding PCMH-type domain.

In terms of assembly, the glycolate oxidase likely consists of three subunits, GlcD, GlcE and GlcF. FAD serves as cofactor.

The protein localises to the cell inner membrane. It carries out the reaction glycolate + A = glyoxylate + AH2. The enzyme catalyses (R)-lactate + A = pyruvate + AH2. Its activity is regulated as follows. In vitro the glycolate oxidase activity is inhibited by the sulfhydryl inhibitors CuSO4 and PCMB, by KCN, but not by the metal complexing agent EDTA. Component of a complex that catalyzes the oxidation of glycolate to glyoxylate. Is required for E.coli to grow on glycolate as a sole source of carbon. Is also able to oxidize D-lactate ((R)-lactate) with a similar rate. Does not link directly to O(2), and 2,6-dichloroindophenol (DCIP) and phenazine methosulfate (PMS) can act as artificial electron acceptors in vitro, but the physiological molecule that functions as a primary electron acceptor during glycolate oxidation is unknown. In Escherichia coli (strain K12), this protein is Glycolate oxidase subunit GlcE.